A 90-amino-acid polypeptide reads, in one-letter code: Protein LURE 1.5 (90 aa).

A signal peptide spans 1–19 (MKLPIIFLTLLIFVSSCTS). 2 disulfide bridges follow: C58/C75 and C61/C82.

It belongs to the DEFL family. Expressed in the pistil. Detected exclusively in the synergid cells.

Its subcellular location is the secreted. Inactive pollen tube attractants guiding pollen tubes to the ovular micropyle. This chain is Protein LURE 1.5, found in Arabidopsis thaliana (Mouse-ear cress).